The primary structure comprises 335 residues: Phosphatidylglycerol--prolipoprotein diacylglyceryl transferase (335 aa).

3 consecutive transmembrane segments (helical) span residues 31-51 (IYWY…TYSL), 67-87 (YIFL…LAIG), and 100-120 (LAIQ…FPLI). Arg163 is a binding site for a 1,2-diacyl-sn-glycero-3-phospho-(1'-sn-glycerol). The next 3 helical transmembrane spans lie at 213 to 233 (PLFL…YFGL), 235 to 255 (YIKQ…YGVI), and 277 to 297 (SLLL…APIL).

Belongs to the Lgt family.

Its subcellular location is the cell membrane. It carries out the reaction L-cysteinyl-[prolipoprotein] + a 1,2-diacyl-sn-glycero-3-phospho-(1'-sn-glycerol) = an S-1,2-diacyl-sn-glyceryl-L-cysteinyl-[prolipoprotein] + sn-glycerol 1-phosphate + H(+). It functions in the pathway protein modification; lipoprotein biosynthesis (diacylglyceryl transfer). Functionally, catalyzes the transfer of the diacylglyceryl group from phosphatidylglycerol to the sulfhydryl group of the N-terminal cysteine of a prolipoprotein, the first step in the formation of mature lipoproteins. The sequence is that of Phosphatidylglycerol--prolipoprotein diacylglyceryl transferase from Ureaplasma urealyticum serovar 10 (strain ATCC 33699 / Western).